Consider the following 118-residue polypeptide: D-dopachrome decarboxylase (118 aa).

P2 is subject to N-acetylproline. K33 is modified (N6-acetyllysine).

Belongs to the MIF family. Homotrimer. As to expression, highly expressed in the liver and at lower levels in the heart, lung and pancreas.

It localises to the cytoplasm. It catalyses the reaction D-dopachrome + H(+) = 5,6-dihydroxyindole + CO2. Its function is as follows. Tautomerization of D-dopachrome with decarboxylation to give 5,6-dihydroxyindole (DHI). This Homo sapiens (Human) protein is D-dopachrome decarboxylase (DDT).